We begin with the raw amino-acid sequence, 142 residues long: DNA-directed RNA polymerases I, II, and III subunit rpabc3 (142 aa).

The non-specific ssDNA binding stretch occupies residues 16–40 (DPDGKKFDRVSRFVCYSENYEMDLQ).

The protein belongs to the eukaryotic RPB8 RNA polymerase subunit family. Component of the RNA polymerase I (Pol I), RNA polymerase II (Pol II) and RNA polymerase III (Pol III) complexes consisting of at least 13, 12 and 17 subunits, respectively. Directly interacts with POLR2A.

It is found in the nucleus. The protein localises to the nucleolus. Functionally, DNA-dependent RNA polymerase catalyzes the transcription of DNA into RNA using the four ribonucleoside triphosphates as substrates. Common component of RNA polymerases I, II and III which synthesize ribosomal RNA precursors, mRNA precursors and many functional non-coding RNAs, and small RNAs, such as 5S rRNA and tRNAs, respectively. This Dictyostelium discoideum (Social amoeba) protein is DNA-directed RNA polymerases I, II, and III subunit rpabc3 (polr2h).